The following is a 129-amino-acid chain: Phosphoribosyl-AMP cyclohydrolase (129 aa).

Mg(2+) is bound at residue Asp76. Cys77 contacts Zn(2+). Residues Asp78 and Asp80 each contribute to the Mg(2+) site. Zn(2+) contacts are provided by Cys97 and Cys104.

It belongs to the PRA-CH family. As to quaternary structure, homodimer. Mg(2+) is required as a cofactor. Requires Zn(2+) as cofactor.

It is found in the cytoplasm. The enzyme catalyses 1-(5-phospho-beta-D-ribosyl)-5'-AMP + H2O = 1-(5-phospho-beta-D-ribosyl)-5-[(5-phospho-beta-D-ribosylamino)methylideneamino]imidazole-4-carboxamide. It participates in amino-acid biosynthesis; L-histidine biosynthesis; L-histidine from 5-phospho-alpha-D-ribose 1-diphosphate: step 3/9. Its function is as follows. Catalyzes the hydrolysis of the adenine ring of phosphoribosyl-AMP. This chain is Phosphoribosyl-AMP cyclohydrolase, found in Polaromonas naphthalenivorans (strain CJ2).